The following is a 90-amino-acid chain: Small ribosomal subunit protein bS16 (90 aa).

Belongs to the bacterial ribosomal protein bS16 family.

The chain is Small ribosomal subunit protein bS16 from Lactobacillus gasseri (strain ATCC 33323 / DSM 20243 / BCRC 14619 / CIP 102991 / JCM 1131 / KCTC 3163 / NCIMB 11718 / NCTC 13722 / AM63).